Consider the following 134-residue polypeptide: Large ribosomal subunit protein eL14z (134 aa).

It belongs to the eukaryotic ribosomal protein eL14 family.

The protein is Large ribosomal subunit protein eL14z (RPL14A) of Arabidopsis thaliana (Mouse-ear cress).